We begin with the raw amino-acid sequence, 119 residues long: Transcription and mRNA export factor SUS1 (119 aa).

It belongs to the ENY2 family. Component of the nuclear pore complex (NPC)-associated TREX-2 complex (transcription and export complex 2), composed of at least SUS1, SAC3, THP1, SEM1, and CDC31. TREX-2 contains 2 SUS1 chains. The TREX-2 complex interacts with the nucleoporin NUP1. Component of the 1.8 MDa SAGA transcription coactivator-HAT complex. SAGA is built of 5 distinct domains with specialized functions. Within the SAGA complex, SUS1, SGF11, SGF73 and UBP8 form an additional subcomplex of SAGA called the DUB module (deubiquitination module). Interacts directly with THP1, SAC3, SGF11, and with the RNA polymerase II.

The protein localises to the nucleus. It localises to the nucleoplasm. It is found in the cytoplasm. The protein resides in the P-body. Functionally, involved in mRNA export coupled transcription activation by association with both the TREX-2 and the SAGA complexes. At the promoters, SAGA is required for recruitment of the basal transcription machinery. It influences RNA polymerase II transcriptional activity through different activities such as TBP interaction and promoter selectivity, interaction with transcription activators, and chromatin modification through histone acetylation and deubiquitination. Within the SAGA complex, participates in a subcomplex required for deubiquitination of H2B and for the maintenance of steady-state H3 methylation levels. The TREX-2 complex functions in docking export-competent ribonucleoprotein particles (mRNPs) to the nuclear entrance of the nuclear pore complex (nuclear basket). TREX-2 participates in mRNA export and accurate chromatin positioning in the nucleus by tethering genes to the nuclear periphery. May also be involved in cytoplasmic mRNA decay by interaction with components of P-bodies. The polypeptide is Transcription and mRNA export factor SUS1 (Candida albicans (strain SC5314 / ATCC MYA-2876) (Yeast)).